Consider the following 199-residue polypeptide: Small heat shock protein hspG4 (199 aa).

Residues 30–199 (NKRVDIIPSM…SSNTIKININ (170 aa)) enclose the sHSP domain. Residues 83–105 (KNQQQQQQQQQLENSNNKENDEP) form a disordered region.

This sequence belongs to the small heat shock protein (HSP20) family.

The protein is Small heat shock protein hspG4 (hspG4) of Dictyostelium discoideum (Social amoeba).